Consider the following 176-residue polypeptide: COA8 family protein CG14806, mitochondrial (176 aa).

Residues 1 to 23 (MNKCFRCQPRISLFQFSLPRCYA) constitute a mitochondrion transit peptide.

It belongs to the COA8 family.

The protein resides in the mitochondrion inner membrane. May be required for cytochrome c complex (COX) assembly and function, COX being the terminal component of the mitochondrial respiratory chain. Functionally, (Microbial infection) Required for optimal replication of E.chaffeensis. The polypeptide is COA8 family protein CG14806, mitochondrial (Drosophila melanogaster (Fruit fly)).